Reading from the N-terminus, the 69-residue chain is NADH dehydrogenase [ubiquinone] 1 beta subcomplex subunit 2 (69 aa).

It belongs to the complex I NDUFB2 subunit family. Complex I is composed of at least 49 different subunits.

It localises to the mitochondrion inner membrane. Functionally, accessory subunit of the mitochondrial membrane respiratory chain NADH dehydrogenase (Complex I), that is believed not to be involved in catalysis. Complex I functions in the transfer of electrons from NADH to the respiratory chain. The immediate electron acceptor for the enzyme is believed to be ubiquinone. This Arabidopsis thaliana (Mouse-ear cress) protein is NADH dehydrogenase [ubiquinone] 1 beta subcomplex subunit 2.